The sequence spans 257 residues: UPF0246 protein Sbal195_1149 (257 aa).

This sequence belongs to the UPF0246 family.

This is UPF0246 protein Sbal195_1149 from Shewanella baltica (strain OS195).